We begin with the raw amino-acid sequence, 234 residues long: MIEVWPAIDLIDSTSVRLTEGDYETKEAMSRTAEEAIEFYSRYNCVTRIHVIDLIAAKQQTPLETNYIEQLVGLTQLPFEVGGGIRTLETIETYFDKGIQNVIIGTKGIQDPEWLKTVAEKYPGRIYISVDAYIDEIKVNGWLEDTGLNLFDYVQQIDSAPLGGIIYTDISKDGKLEGPNFELTAKLAASTKLPVIASGGIRSKEDLERLEKAGVAVAIVGKAANTQSFWEGLS.

Catalysis depends on Asp9, which acts as the Proton acceptor. The active-site Proton donor is Asp131.

This sequence belongs to the HisA/HisF family.

The protein localises to the cytoplasm. It catalyses the reaction 1-(5-phospho-beta-D-ribosyl)-5-[(5-phospho-beta-D-ribosylamino)methylideneamino]imidazole-4-carboxamide = 5-[(5-phospho-1-deoxy-D-ribulos-1-ylimino)methylamino]-1-(5-phospho-beta-D-ribosyl)imidazole-4-carboxamide. It functions in the pathway amino-acid biosynthesis; L-histidine biosynthesis; L-histidine from 5-phospho-alpha-D-ribose 1-diphosphate: step 4/9. In Staphylococcus carnosus (strain TM300), this protein is 1-(5-phosphoribosyl)-5-[(5-phosphoribosylamino)methylideneamino] imidazole-4-carboxamide isomerase.